A 942-amino-acid chain; its full sequence is Eukaryotic translation initiation factor 3 subunit A (942 aa).

A PCI domain is found at 320 to 494 (FKKYSSIILL…NTVTFFKDPF (175 aa)). Coiled coils occupy residues 499 to 529 (KAAG…GEEI), 588 to 669 (ITQT…KQRE), 705 to 734 (SKLS…AYRK), and 821 to 912 (IEEV…RKAQ). A disordered region spans residues 502–546 (GTVEEEEEEEEEEGEEVEGEEAETGEEIVEEGEEHENEENKEPEP). A compositionally biased stretch (acidic residues) spans 504–538 (VEEEEEEEEEEGEEVEGEEAETGEEIVEEGEEHEN). Composition is skewed to basic and acidic residues over residues 836-870 (RKAE…ERKS) and 889-911 (RSAK…ERKA). The tract at residues 836–942 (RKAEIEAEER…KMKLRRASKK (107 aa)) is disordered.

Belongs to the eIF-3 subunit A family. Component of the eukaryotic translation initiation factor 3 (eIF-3) complex.

Its subcellular location is the cytoplasm. Functionally, RNA-binding component of the eukaryotic translation initiation factor 3 (eIF-3) complex, which is involved in protein synthesis of a specialized repertoire of mRNAs and, together with other initiation factors, stimulates binding of mRNA and methionyl-tRNAi to the 40S ribosome. The eIF-3 complex specifically targets and initiates translation of a subset of mRNAs involved in cell proliferation. This Vanderwaltozyma polyspora (strain ATCC 22028 / DSM 70294 / BCRC 21397 / CBS 2163 / NBRC 10782 / NRRL Y-8283 / UCD 57-17) (Kluyveromyces polysporus) protein is Eukaryotic translation initiation factor 3 subunit A.